We begin with the raw amino-acid sequence, 141 residues long: Small ribosomal subunit protein bS6 (141 aa).

Residues 97–141 are disordered; it reads TGQSEMLKAEENRSERRERRDRPEHADSADGDDSDNSDASDNADE. Over residues 103–124 the composition is skewed to basic and acidic residues; sequence LKAEENRSERRERRDRPEHADS. The segment covering 125-141 has biased composition (acidic residues); that stretch reads ADGDDSDNSDASDNADE.

The protein belongs to the bacterial ribosomal protein bS6 family.

Functionally, binds together with bS18 to 16S ribosomal RNA. In Pseudomonas fluorescens (strain ATCC BAA-477 / NRRL B-23932 / Pf-5), this protein is Small ribosomal subunit protein bS6.